A 133-amino-acid polypeptide reads, in one-letter code: Large ribosomal subunit protein bL20 (133 aa).

The protein belongs to the bacterial ribosomal protein bL20 family.

Its function is as follows. Binds directly to 23S ribosomal RNA and is necessary for the in vitro assembly process of the 50S ribosomal subunit. It is not involved in the protein synthesizing functions of that subunit. The chain is Large ribosomal subunit protein bL20 from Bartonella henselae (strain ATCC 49882 / DSM 28221 / CCUG 30454 / Houston 1) (Rochalimaea henselae).